The following is a 292-amino-acid chain: D-alanyl-D-alanine endopeptidase (292 aa).

The N-terminal stretch at 1-18 (MFKKALFILSLCPSFALA) is a signal peptide. The active-site Acyl-ester intermediate is the Ser45. Lys48 acts as the Proton acceptor in catalysis. Residue Ser102 is part of the active site. Lys207 is a binding site for substrate.

This sequence belongs to the peptidase S11 family.

The protein resides in the periplasm. Cell wall formation. May play a specialized role in remodeling the cell wall. Specifically hydrolyzes the DD-diaminopimelate-alanine bonds in high-molecular-mass murein sacculi. The chain is D-alanyl-D-alanine endopeptidase (pbpG) from Haemophilus influenzae (strain ATCC 51907 / DSM 11121 / KW20 / Rd).